A 1033-amino-acid polypeptide reads, in one-letter code: Tyrosine-protein kinase-like otk (1033 aa).

The signal sequence occupies residues 1–22 (MTARMISIYGLVLASMMASVLA). Topologically, residues 23–581 (SSSRFQRLPQ…GGDGFLVTRA (559 aa)) are extracellular. 5 Ig-like C2-type domains span residues 25–114 (SRFQ…AKLS), 113–199 (LSVI…RVMS), 251–365 (PEDL…VPVS), 368–463 (PGVL…VAIN), and 468–558 (PKFS…VQLI). Asn39 carries an N-linked (GlcNAc...) asparagine glycan. 4 disulfides stabilise this stretch: Cys46–Cys95, Cys137–Cys188, Cys276–Cys354, and Cys399–Cys447. N-linked (GlcNAc...) asparagine glycosylation is found at Asn336, Asn417, Asn429, Asn444, Asn457, Asn512, and Asn524. Cys490 and Cys542 form a disulfide bridge. A helical transmembrane segment spans residues 582 to 602 (VLITMTVALAYIVLVVGLMLW). The Cytoplasmic portion of the chain corresponds to 603–1033 (CRYRRQARKA…LSKAMQSAEK (431 aa)). 2 disordered regions span residues 617–679 (LSTK…KKSA) and 718–760 (SPSD…KTSM). Positions 655–673 (KSSGDAQKSDDTACSQQSR) are enriched in polar residues. Ser678 carries the post-translational modification Phosphoserine. The region spanning 692-1028 (LSELIQIGRG…QLGAALSKAM (337 aa)) is the Protein kinase; inactive domain. Basic and acidic residues predominate over residues 720–731 (SDKDADTEKQHS).

This sequence belongs to the protein kinase superfamily. Tyr protein kinase family. Insulin receptor subfamily. In terms of assembly, interacts with plexA; component of a receptor complex that mediates the repulsive signaling in response to Semaphorin ligands.

The protein localises to the cell membrane. In terms of biological role, acts as a calcium-dependent, homophilic cell adhesion molecule that regulates neural recognition during the development of the nervous system. Component of the repulsive Plexin signaling response to regulate motor axon guidance at the embryonic stage. Also component of a receptor complex that is required in the adult visual system to innervate the lamina layer; specific targeting of R1-R6 axons. This is Tyrosine-protein kinase-like otk from Drosophila yakuba (Fruit fly).